Here is a 236-residue protein sequence, read N- to C-terminus: Alpha-acetolactate decarboxylase (236 aa).

It belongs to the alpha-acetolactate decarboxylase family.

The catalysed reaction is (2S)-2-acetolactate + H(+) = (R)-acetoin + CO2. It functions in the pathway polyol metabolism; (R,R)-butane-2,3-diol biosynthesis; (R,R)-butane-2,3-diol from pyruvate: step 2/3. Converts acetolactate into acetoin. This is Alpha-acetolactate decarboxylase (aldB) from Lactococcus lactis subsp. cremoris (strain MG1363).